The following is a 379-amino-acid chain: Succinyl-diaminopimelate desuccinylase (379 aa).

Position 70 (His-70) interacts with Zn(2+). Asp-72 is an active-site residue. Residue Asp-103 coordinates Zn(2+). The Proton acceptor role is filled by Glu-137. Residues Glu-138, Glu-166, and His-352 each contribute to the Zn(2+) site.

The protein belongs to the peptidase M20A family. DapE subfamily. As to quaternary structure, homodimer. Zn(2+) is required as a cofactor. Requires Co(2+) as cofactor.

It catalyses the reaction N-succinyl-(2S,6S)-2,6-diaminopimelate + H2O = (2S,6S)-2,6-diaminopimelate + succinate. It participates in amino-acid biosynthesis; L-lysine biosynthesis via DAP pathway; LL-2,6-diaminopimelate from (S)-tetrahydrodipicolinate (succinylase route): step 3/3. In terms of biological role, catalyzes the hydrolysis of N-succinyl-L,L-diaminopimelic acid (SDAP), forming succinate and LL-2,6-diaminopimelate (DAP), an intermediate involved in the bacterial biosynthesis of lysine and meso-diaminopimelic acid, an essential component of bacterial cell walls. The sequence is that of Succinyl-diaminopimelate desuccinylase from Burkholderia ambifaria (strain MC40-6).